We begin with the raw amino-acid sequence, 138 residues long: Ribonuclease kappa-A (138 aa).

The signal sequence occupies residues 1–24; that stretch reads MVLYFSPVLTFFLANFFNSKSTTT. Over 25 to 75 the chain is Extracellular; that stretch reads ENLQVFLVENQHRDSKRKINPTFSKKGIEVRQQNENLWSKIVALRFDYSVW. The chain crosses the membrane as a helical span at residues 76–96; it reads GIIQLVLMMGLFFYINSVALI. The Cytoplasmic portion of the chain corresponds to 97-138; it reads EDLPIDEEFNSVEEFYTAATSAYNQNAYTVGLPVHLCAYASI.

Belongs to the RNase K family.

The protein localises to the membrane. Its function is as follows. Endoribonuclease. The polypeptide is Ribonuclease kappa-A (Ceratitis capitata (Mediterranean fruit fly)).